Reading from the N-terminus, the 194-residue chain is Potassium-transporting ATPase KdpC subunit (194 aa).

Residues 12–34 form a helical membrane-spanning segment; sequence LFLLLLTGGVYPLLTTALGQWWF.

This sequence belongs to the KdpC family. The system is composed of three essential subunits: KdpA, KdpB and KdpC.

The protein resides in the cell inner membrane. Part of the high-affinity ATP-driven potassium transport (or Kdp) system, which catalyzes the hydrolysis of ATP coupled with the electrogenic transport of potassium into the cytoplasm. This subunit acts as a catalytic chaperone that increases the ATP-binding affinity of the ATP-hydrolyzing subunit KdpB by the formation of a transient KdpB/KdpC/ATP ternary complex. This chain is Potassium-transporting ATPase KdpC subunit, found in Salmonella agona (strain SL483).